The chain runs to 448 residues: Argininosuccinate synthase (448 aa).

Residues 17-25 and alanine 43 contribute to the ATP site; that span reads AFSGGLDTS. Tyrosine 99 is a binding site for L-citrulline. ATP-binding residues include glycine 129 and threonine 131. L-aspartate is bound by residues threonine 131, asparagine 135, and aspartate 136. Asparagine 135 is an L-citrulline binding site. An ATP-binding site is contributed by aspartate 136. L-citrulline contacts are provided by arginine 139 and serine 192. Aspartate 194 is a binding site for ATP. 3 residues coordinate L-citrulline: threonine 201, glutamate 203, and glutamate 280.

This sequence belongs to the argininosuccinate synthase family. Type 2 subfamily. Homotetramer.

It is found in the cytoplasm. The enzyme catalyses L-citrulline + L-aspartate + ATP = 2-(N(omega)-L-arginino)succinate + AMP + diphosphate + H(+). Its pathway is amino-acid biosynthesis; L-arginine biosynthesis; L-arginine from L-ornithine and carbamoyl phosphate: step 2/3. The sequence is that of Argininosuccinate synthase from Acidovorax ebreus (strain TPSY) (Diaphorobacter sp. (strain TPSY)).